The sequence spans 127 residues: Cytochrome c' (127 aa).

Position 1 is a pyrrolidone carboxylic acid (glutamine 1). The heme c site is built by arginine 12, glutamine 13, aspartate 67, cysteine 116, cysteine 119, and histidine 120.

As to quaternary structure, homodimer. In terms of processing, binds 1 heme c group covalently per subunit.

It localises to the periplasm. Cytochrome c' is the most widely occurring bacterial c-type cytochrome. Cytochromes c' are high-spin proteins and the heme has no sixth ligand. Their exact function is not known. This is Cytochrome c' from Alcaligenes xylosoxydans xylosoxydans (Achromobacter xylosoxidans).